Reading from the N-terminus, the 28-residue chain is U-actitoxin-Ate1 (28 aa).

An N-terminal signal peptide occupies residues 1-15 (MSLILIFFAFTVLKS). Residues Cys-20 and Cys-26 are joined by a disulfide bond.

In terms of assembly, monomer in solution. In terms of processing, may be N-glycosylated at Asn-22. Activity with this modification has not be tested. In terms of tissue distribution, highly expressed in the tentacles. Weakly expressed in acrorhagi and mesenteric filaments.

It is found in the secreted. The protein localises to the nematocyst. In terms of biological role, probable toxin expected to be employed in prey capture and/or defense against predators (based on its abundance in tentacles). Has only a weak affinity for lipid membranes. Shows moderate cytotoxic activity against breast cancer cell lines (MCF-7 and MDA-MB-231). This Actinia tenebrosa (Australian red waratah sea anemone) protein is U-actitoxin-Ate1.